A 679-amino-acid polypeptide reads, in one-letter code: Glycine--tRNA ligase beta subunit (679 aa).

This sequence belongs to the class-II aminoacyl-tRNA synthetase family. As to quaternary structure, tetramer of two alpha and two beta subunits.

The protein localises to the cytoplasm. The enzyme catalyses tRNA(Gly) + glycine + ATP = glycyl-tRNA(Gly) + AMP + diphosphate. This is Glycine--tRNA ligase beta subunit from Streptococcus pyogenes serotype M3 (strain ATCC BAA-595 / MGAS315).